A 345-amino-acid chain; its full sequence is MQGYDIPRDVISLLKDAETYLAECLQNEKLSGRAREQRDEILHSFGQIRNRYGVEFALKGGEAAFTHTGQDDYDDIHNASYAPSQASDEVSVASDYVENDSEVEEELDKIFKQGYLERRKKDHGFFGSEWQKRWCVLTTRAFLYYSSEKGKQPKNGFLIKDSLAQMMPYIRKDSRRDSCFEVVTPNQQVFQFTAASPSDARDWVEQIQFLVKDTQSTIIPYEDDEETYDDIESTESSPVVGLTNDSENSLQEDDVYESIPGDEETEESEDENYEMKPGEPVIFYGDYYQGLWNCFSDNSDELSFERGDLIHILSKEYHAYGWWVGELDGIVGIVPKDYLTLAFDL.

In terms of domain architecture, PH spans 109 to 212 (KIFKQGYLER…WVEQIQFLVK (104 aa)). The segment at 226 to 274 (ETYDDIESTESSPVVGLTNDSENSLQEDDVYESIPGDEETEESEDENYE) is disordered. Acidic residues predominate over residues 250-272 (LQEDDVYESIPGDEETEESEDEN). Residues 283–344 (FYGDYYQGLW…PKDYLTLAFD (62 aa)) enclose the SH3 domain.

It belongs to the SKAP family. In terms of assembly, homodimer. Post-translationally, phosphorylated on tyrosines.

The protein resides in the cytoplasm. It is found in the nucleus. It localises to the cell membrane. Its function is as follows. Positively regulates T-cell receptor signaling. Required for optimal conjugation between T-cells and antigen-presenting cells. In Xenopus tropicalis (Western clawed frog), this protein is Src kinase-associated phosphoprotein 1 (skap1).